A 130-amino-acid chain; its full sequence is Mini-ribonuclease 3 (130 aa).

Aspartate 19 is a catalytic residue. The segment at 69–91 (EQDVVRRGRNAKGHGAPKSADPA) is disordered.

The protein belongs to the MrnC RNase family. As to quaternary structure, homodimer. Mg(2+) is required as a cofactor.

The protein localises to the cytoplasm. In terms of biological role, involved in correct processing of both the 5' and 3' ends of 23S rRNA precursor. Processes 30S rRNA precursor transcript even in absence of ribonuclease 3 (Rnc); Rnc processes 30S rRNA into smaller rRNA precursors. In Symbiobacterium thermophilum (strain DSM 24528 / JCM 14929 / IAM 14863 / T), this protein is Mini-ribonuclease 3.